A 366-amino-acid polypeptide reads, in one-letter code: Aliphatic nitrilase (366 aa).

One can recognise a CN hydrolase domain in the interval 8–282; that stretch reads FKVAAVQAQP…EGILYADIDL (275 aa). E48 acts as the Proton acceptor in catalysis. K131 serves as the catalytic Proton donor. The active-site Nucleophile is the C165. Residues 346 to 366 form a disordered region; it reads DEQRALPSTHSDETDRATASI. Residues 355–366 are compositionally biased toward basic and acidic residues; that stretch reads HSDETDRATASI.

It belongs to the carbon-nitrogen hydrolase superfamily. Nitrilase family. In terms of assembly, homodimer.

The catalysed reaction is an aliphatic nitrile + 2 H2O = a carboxylate + NH4(+). This is Aliphatic nitrilase (nitA) from Rhodococcus rhodochrous.